Here is a 68-residue protein sequence, read N- to C-terminus: Small ribosomal subunit protein bS21 (68 aa).

The segment at 39 to 68 is disordered; the sequence is PPSVKRVRKKQESERRHRKERAMRRRMMEE. Residues 54–68 are compositionally biased toward basic residues; the sequence is RHRKERAMRRRMMEE.

Belongs to the bacterial ribosomal protein bS21 family.

This is Small ribosomal subunit protein bS21 from Orientia tsutsugamushi (strain Boryong) (Rickettsia tsutsugamushi).